A 972-amino-acid chain; its full sequence is Microtubule-associated protein 1S (972 aa).

The necessary for the microtubule-organizing center localization stretch occupies residues 1 to 715; sequence MAAVMAAPEP…SESLPTLSDS (715 aa). Residues 454–469 are compositionally biased toward polar residues; the sequence is LEVPSRANSQDSLASR. Residues 454 to 632 are disordered; that stretch reads LEVPSRANSQ…PHSTEVDESL (179 aa). S462 carries the post-translational modification Phosphoserine. Basic and acidic residues predominate over residues 489–505; sequence VRREPALATRDQKKDTK. Composition is skewed to pro residues over residues 537 to 550 and 564 to 581; these read APVP…PAPE and PPAP…PPTA. 3 positions are modified to phosphoserine: S585, S590, and S592. Residues 600 to 972 form a necessary for interaction with RASSF1 region; sequence PDASPSATTP…EAFPACKVEF (373 aa). Positions 602-620 are enriched in low complexity; it reads ASPSATTPTLTTPSLPAEL. The segment at 644 to 879 is necessary for association with microtubules; the sequence is DAGLSLPLRL…GGGAGHLDQN (236 aa). A phosphoserine mark is found at S659 and S683. A disordered region spans residues 671–854; the sequence is CEFSHRKPPP…SSGPSSRPAP (184 aa). Residues 702–721 show a composition bias toward low complexity; it reads PTSVSESLPTLSDSDPVPVA. S723 carries the phosphoserine modification. Residues 737 to 748 show a composition bias toward pro residues; it reads LPTPRVPPPLPD. A compositionally biased stretch (low complexity) spans 781–800; the sequence is ARPSSASAAPRAATVAAKTK. Residues 874-972 are necessary for association with actin; the sequence is GHLDQNFFLR…EAFPACKVEF (99 aa). The tract at residues 880-904 is necessary for the mitochondrial aggregation and genome destruction; sequence FFLRVRALCYVISGQGQRQEEGLRG.

The protein belongs to the MAP1A/MAP1B/MAP1S family. In terms of assembly, heterodimer of a heavy and a light chain. Interacts with microtubules and actin. Both MAP1S heavy and light chains interact with microtubules. MAP1S light chain interacts with actin. Interacts with LRPPRC, RASSF1, microtubules and VCY2. Interacts (via C-terminus) with GAN (via Kelch domains). Interacts with WDR47 (via N-terminus of light chain). Interacts with ESR1. As to expression, expressed in cortex cerebellum, dorsal root ganglia, frontal cortex, hippocampus, hypothalamus, mesencephalon, medulla oblongata, occipital cortex, pons, spinal cord, striatum of the brain, neurons, heart, testis and skeletal muscle (at protein level).

It localises to the nucleus. The protein resides in the cytoplasm. Its subcellular location is the cytosol. It is found in the cytoskeleton. The protein localises to the spindle. Functionally, microtubule-associated protein that mediates aggregation of mitochondria resulting in cell death and genomic destruction (MAGD). Plays a role in anchoring the microtubule organizing center to the centrosomes. Binds to DNA. Plays a role in apoptosis. Involved in the formation of microtubule bundles. The chain is Microtubule-associated protein 1S (Map1s) from Rattus norvegicus (Rat).